Consider the following 186-residue polypeptide: Nicotinamide-nucleotide adenylyltransferase (186 aa).

It belongs to the archaeal NMN adenylyltransferase family.

The protein resides in the cytoplasm. The catalysed reaction is beta-nicotinamide D-ribonucleotide + ATP + H(+) = diphosphate + NAD(+). Its pathway is cofactor biosynthesis; NAD(+) biosynthesis; NAD(+) from nicotinamide D-ribonucleotide: step 1/1. This is Nicotinamide-nucleotide adenylyltransferase from Pyrococcus horikoshii (strain ATCC 700860 / DSM 12428 / JCM 9974 / NBRC 100139 / OT-3).